The sequence spans 387 residues: MYEPKPEHRFTFGLWTVGNVGRDPFGDAVRERLDPVYVVHKLAELGAYGVNLHDEDLIPRGTPPQERDQIVRRFKKALDETGLKVPMVTANLFSDPAFKDGAFTSPDPWVRAYALRKSLETMDLGAELGAEIYVVWPGREGAEVEATGKARKVWDWVREALNFMAAYAEDQGYGYRFALEPKPNEPRGDIYFATVGSMLAFIHTLDRPERFGLNPEFAHETMAGLNFVHAVAQALDAGKLFHIDLNDQRMSRFDQDLRFGSENLKAAFFLVDLLESSGYQGPRHFDAHALRTEDEEGVWAFARGCMRTYLILKERAEAFREDPEVKELLAAYYQEDPAALALLGPYSREKAEALKRAELPLEAKRRRGYALERLDQLAVEYLLGVRG.

Residues histidine 53 and aspartate 56 contribute to the active site. Mg(2+) is bound by residues glutamate 180, glutamate 216, histidine 219, aspartate 244, aspartate 254, aspartate 256, and aspartate 286.

Belongs to the xylose isomerase family. As to quaternary structure, homotetramer. It depends on Mg(2+) as a cofactor.

It is found in the cytoplasm. The enzyme catalyses alpha-D-xylose = alpha-D-xylulofuranose. The chain is Xylose isomerase (xylA) from Thermus thermophilus (strain ATCC 27634 / DSM 579 / HB8).